The chain runs to 501 residues: U6 snRNA (guanine-N(2))-methyltransferase THUMPD2 (501 aa).

The THUMP domain maps to 149–264 (TEQIQELQET…DVYSVLGIPV (116 aa)). Residues 414 to 469 (LKGGEASSGPLNSQGGHTEEPGGEERLTPAEKAAVSEPVSSPFAASNQGRLDRMPP) are disordered. A compositionally biased stretch (basic and acidic residues) spans 430–442 (HTEEPGGEERLTP).

It belongs to the methyltransferase superfamily. Part of the heterodimeric THUMPD2-TRM112 methyltransferase complex; this complex forms an active tRNA methyltransferase, where TRMT112 acts as an activator of the catalytic subunit THUMPD2.

Its subcellular location is the nucleus. It catalyses the reaction guanosine in U6 snRNA + S-adenosyl-L-methionine = N(2)-methylguanosine in U6 snRNA + S-adenosyl-L-homocysteine + H(+). Functionally, catalytic subunit of the THUMPD2-TRM112 methyltransferase complex, that specifically mediates the S-adenosyl-L-methionine-dependent N(2)-methylation of guanosine nucleotides, most probably at position 72 (m2G72), in the U6snRNA of the major spliceosome. This modification in the U6 snRNA affects the constitutive splicing efficiency of introns that have suboptimal splice sites and can impact final mRNA levels. This chain is U6 snRNA (guanine-N(2))-methyltransferase THUMPD2, found in Bos taurus (Bovine).